A 356-amino-acid chain; its full sequence is Protein pelota homolog (356 aa).

It belongs to the eukaryotic release factor 1 family. Pelota subfamily. As to quaternary structure, monomer. A divalent metal cation serves as cofactor.

The protein localises to the cytoplasm. In terms of biological role, may function in recognizing stalled ribosomes, interact with stem-loop structures in stalled mRNA molecules, and effect endonucleolytic cleavage of the mRNA. May play a role in the release non-functional ribosomes and degradation of damaged mRNAs. Has endoribonuclease activity. The sequence is that of Protein pelota homolog from Pyrococcus abyssi (strain GE5 / Orsay).